Reading from the N-terminus, the 126-residue chain is Small ribosomal subunit protein uS13c (126 aa).

The segment at 100 to 126 (GQRTRTNARTRRGARQTVAGKKKAPSK) is disordered. The span at 101-126 (QRTRTNARTRRGARQTVAGKKKAPSK) shows a compositional bias: basic residues.

It belongs to the universal ribosomal protein uS13 family. As to quaternary structure, part of the 30S ribosomal subunit.

It localises to the plastid. The protein localises to the cyanelle. In terms of biological role, located at the top of the head of the 30S subunit, it contacts several helices of the 16S rRNA. This chain is Small ribosomal subunit protein uS13c, found in Cyanophora paradoxa.